Reading from the N-terminus, the 94-residue chain is Putative FXYD domain-containing ion transport regulator 8 (94 aa).

The signal sequence occupies residues 1 to 18 (MEVVLIFVYSLLVPVVLA). Residues 19 to 34 (SAAKEKEIDPFHYNYQ) lie on the Extracellular side of the membrane. Residues 35-58 (TLRIGGLVFDVVLFLVPSCHLLSH) traverse the membrane as a helical segment. The Cytoplasmic portion of the chain corresponds to 59 to 94 (RCKCSFNQKPQDPGDKEAQVENFITANAKEPQKAKN). The tract at residues 66-94 (QKPQDPGDKEAQVENFITANAKEPQKAKN) is disordered.

Belongs to the FXYD family.

It localises to the membrane. This chain is Putative FXYD domain-containing ion transport regulator 8 (FXYD6P3), found in Homo sapiens (Human).